The chain runs to 138 residues: Small ribosomal subunit protein uS11c (138 aa).

The protein belongs to the universal ribosomal protein uS11 family. Part of the 30S ribosomal subunit.

It localises to the plastid. The sequence is that of Small ribosomal subunit protein uS11c from Cuscuta gronovii (Common dodder).